The following is a 323-amino-acid chain: MNSSCCPSSSYPTLPNLSQHPAAPSASNRSGSGFCEQVFIKPEVFLALGIVSLMENILVILAVVRNGNLHSPMYFFLCSLAAADMLVSLSNSLETIMIVVINSDSLTLEDQFIQHMDNIFDSMICISLVASICNLLAIAVDRYVTIFYALRYHSIMTVRKALSLIVAIWVCCGICGVMFIVYSESKMVIVCLITMFFAMVLLMGTLYIHMFLFARLHVQRIAALPPADGVAPQQHSCMKGAVTITILLGVFIFCWAPFFLHLVLIITCPTNPYCICYTAHFNTYLVLIMCNSVIDPLIYAFRSLELRNTFKEILCGCNGMNVG.

At 1 to 37 the chain is on the extracellular side; sequence MNSSCCPSSSYPTLPNLSQHPAAPSASNRSGSGFCEQ. Residues N2, N16, and N28 are each glycosylated (N-linked (GlcNAc...) asparagine). The helical transmembrane segment at 38–63 threads the bilayer; sequence VFIKPEVFLALGIVSLMENILVILAV. Residues 64–75 are Cytoplasmic-facing; the sequence is VRNGNLHSPMYF. A helical transmembrane segment spans residues 76-100; it reads FLCSLAAADMLVSLSNSLETIMIVV. Over 101 to 118 the chain is Extracellular; the sequence is INSDSLTLEDQFIQHMDN. Residues 119 to 140 traverse the membrane as a helical segment; sequence IFDSMICISLVASICNLLAIAV. At 141–160 the chain is on the cytoplasmic side; the sequence is DRYVTIFYALRYHSIMTVRK. A helical membrane pass occupies residues 161–181; that stretch reads ALSLIVAIWVCCGICGVMFIV. Residues 182–186 are Extracellular-facing; it reads YSESK. Residues 187–210 form a helical membrane-spanning segment; it reads MVIVCLITMFFAMVLLMGTLYIHM. The Cytoplasmic segment spans residues 211–245; it reads FLFARLHVQRIAALPPADGVAPQQHSCMKGAVTIT. The chain crosses the membrane as a helical span at residues 246-268; the sequence is ILLGVFIFCWAPFFLHLVLIITC. At 269 to 277 the chain is on the extracellular side; that stretch reads PTNPYCICY. Residues 278 to 301 traverse the membrane as a helical segment; sequence TAHFNTYLVLIMCNSVIDPLIYAF. Residues 302 to 323 lie on the Cytoplasmic side of the membrane; sequence RSLELRNTFKEILCGCNGMNVG. C315 is lipidated: S-palmitoyl cysteine.

The protein belongs to the G-protein coupled receptor 1 family. Brain.

It localises to the cell membrane. Functionally, receptor for MSH (alpha, beta and gamma) and ACTH. This receptor is mediated by G proteins which activate adenylate cyclase. Required for expression of anticipatory patterns of activity and wakefulness during periods of limited nutrient availability and for the normal regulation of circadian clock activity in the brain. In Rattus norvegicus (Rat), this protein is Melanocortin receptor 3 (Mc3r).